A 258-amino-acid chain; its full sequence is Alpha-fibrinogenase (258 aa).

The first 18 residues, 1–18 (MVLIRVLANLVMLHLSYG), serve as a signal peptide directing secretion. The propeptide occupies 19–24 (EKSSEL). One can recognise a Peptidase S1 domain in the interval 25 to 249 (VIGGRPCNIN…YNDWIQSIIA (225 aa)). Cystine bridges form between Cys31/Cys163, Cys50/Cys66, Cys98/Cys256, Cys142/Cys210, Cys174/Cys189, and Cys200/Cys225. Asn44 carries N-linked (GlcNAc...) asparagine glycosylation. Residue His65 is the Charge relay system of the active site. 2 N-linked (GlcNAc...) asparagine glycosylation sites follow: Asn79 and Asn101. Residue Asp110 is the Charge relay system of the active site. Ser204 (charge relay system) is an active-site residue.

It belongs to the peptidase S1 family. Snake venom subfamily. In terms of assembly, monomer. Post-translationally, glycosylated. Contains 8.5% of hexoses, 5.8% of hexosamines and 0.8% of sialic acids. Expressed by the venom gland.

The protein resides in the secreted. Inhibited by diisopropylfluorophosphate (DFP) and PMSF, and partially by soybean trypsin inhibitor, but not by EDTA. Its function is as follows. Degrades alpha chain of fibrinogen (FGA), and has strong caseinolytic activity. Cleaves oxidized insulin B-chain at '40-Tyr-|-Leu-41', '48-Phe-|-Phe-49' and '49-Phe-|-Tyr-50', and glucagon at the bonds '62-Tyr-|-Ser-63', 66-Leu-|-Asp-67' and '78-Leu-|-Met-79' bonds. This is Alpha-fibrinogenase from Macrovipera lebetinus (Levantine viper).